A 133-amino-acid chain; its full sequence is ATP synthase epsilon chain (133 aa).

Belongs to the ATPase epsilon chain family. As to quaternary structure, F-type ATPases have 2 components, CF(1) - the catalytic core - and CF(0) - the membrane proton channel. CF(1) has five subunits: alpha(3), beta(3), gamma(1), delta(1), epsilon(1). CF(0) has three main subunits: a, b and c.

Its subcellular location is the cell membrane. Its function is as follows. Produces ATP from ADP in the presence of a proton gradient across the membrane. The protein is ATP synthase epsilon chain of Halalkalibacterium halodurans (strain ATCC BAA-125 / DSM 18197 / FERM 7344 / JCM 9153 / C-125) (Bacillus halodurans).